Consider the following 793-residue polypeptide: Protein PAT1 homolog (793 aa).

S200 and S208 each carry phosphoserine. Disordered stretches follow at residues P203–R256 and M292–N312. A compositionally biased stretch (polar residues) spans P219 to L242. S342 and S343 each carry phosphoserine. Residues R476 to L501 are disordered. Residues N491–L501 are compositionally biased toward basic and acidic residues.

In terms of assembly, interacts with MPK4 and SUMM2. Phosphorylated at Ser-208 by MPK4 upon flg22 elicitation. Phosphorylated at Ser-200, Ser-342 and Ser-343 upon flg22 elicitation.

The protein resides in the cytoplasm. It localises to the P-body. Activator of mRNA decapping. Involved in mRNA decay via decapping. Involved in disease resistance in response to biotrophic and necrotrophic pathogens. Is part of a signaling pathway including MPK4 and the disease resistance protein SUMM2. This is Protein PAT1 homolog from Arabidopsis thaliana (Mouse-ear cress).